Consider the following 462-residue polypeptide: Integrator complex subunit 12 (462 aa).

A disordered region spans residues 42 to 132 (GIDSSYRPSQ…PETQSSPITV (91 aa)). The span at 59–86 (ISSTKNISIKQEPKISSSLPSGNNNGKV) shows a compositional bias: polar residues. Residue Lys68 forms a Glycyl lysine isopeptide (Lys-Gly) (interchain with G-Cter in SUMO2) linkage. Residues 88–124 (TTEKVKKEAEKRPADKMKSDITEGVDIPKKPRLEKPE) show a composition bias toward basic and acidic residues. Residue Ser128 is modified to Phosphoserine. Residues 159-215 (GLACVVCRQMMVASGNQLVECQECHNLYHRDCHKPQVTDKEANDPRLVWYCARCTRQ) form a PHD-type zinc finger. Lys254 participates in a covalent cross-link: Glycyl lysine isopeptide (Lys-Gly) (interchain with G-Cter in SUMO2). A compositionally biased stretch (polar residues) spans 301–328 (SSAGPSTAKLSSTTQNNTGKPATSSANQ). The disordered stretch occupies residues 301-462 (SSAGPSTAKL…KKAAQKKLKK (162 aa)). Low complexity-rich tracts occupy residues 347-358 (KIGSNNSTTPTV) and 382-437 (VSKV…GPTS). Positions 449–462 (QMVKKKAAQKKLKK) are enriched in basic residues.

The protein belongs to the Integrator subunit 12 family. As to quaternary structure, component of the Integrator complex, composed of core subunits INTS1, INTS2, INTS3, INTS4, INTS5, INTS6, INTS7, INTS8, INTS9/RC74, INTS10, INTS11/CPSF3L, INTS12, INTS13, INTS14 and INTS15. The core complex associates with protein phosphatase 2A subunits PPP2CA and PPP2R1A, to form the Integrator-PP2A (INTAC) complex. Post-translationally, dephosphorylated at Ser-128 by the PNUTS-PP1 complex, promoting RNA polymerase II transcription pause-release.

It localises to the nucleus. In terms of biological role, component of the integrator complex, a multiprotein complex that terminates RNA polymerase II (Pol II) transcription in the promoter-proximal region of genes. The integrator complex provides a quality checkpoint during transcription elongation by driving premature transcription termination of transcripts that are unfavorably configured for transcriptional elongation: the complex terminates transcription by (1) catalyzing dephosphorylation of the C-terminal domain (CTD) of Pol II subunit POLR2A/RPB1 and SUPT5H/SPT5, (2) degrading the exiting nascent RNA transcript via endonuclease activity and (3) promoting the release of Pol II from bound DNA. The integrator complex is also involved in terminating the synthesis of non-coding Pol II transcripts, such as enhancer RNAs (eRNAs), small nuclear RNAs (snRNAs), telomerase RNAs and long non-coding RNAs (lncRNAs). Mediates recruitment of cytoplasmic dynein to the nuclear envelope, probably as component of the integrator complex. The polypeptide is Integrator complex subunit 12 (INTS12) (Pongo abelii (Sumatran orangutan)).